The primary structure comprises 429 residues: Keratin, type I cytoskeletal 18 (429 aa).

The tract at residues 2 to 78 (SYSRSVYSSS…NVNLIGGGQN (77 aa)) is head. Positions 79–114 (EKETMQDLNDRLASYLERVRSLEAANKKLEVQIRQH) are coil 1A. Residues 79 to 389 (EKETMQDLND…RLLEGDGSFD (311 aa)) enclose the IF rod domain. Residues 115 to 130 (TEKKGPSKDWSPYYKT) are linker 1. The interval 131–222 (IEDLRKQVFD…KNHQDDVTEL (92 aa)) is coil 1B. The tract at residues 223–246 (QAQVARSAVTVEVDAPKSQDLGKI) is linker 12. The segment at 247–385 (MTELRAQYDG…HTYRRLLEGD (139 aa)) is coil 2. The interval 386–429 (GSFDLQDAVPTVTTQTVKKVITTTQRIVDGKVVSESNDTEVLKS) is tail.

Belongs to the intermediate filament family. Heterotetramer of two type I and two type II keratins. Keratin-18 associates with keratin-8. In terms of processing, phosphorylated. Proteolytically cleaved by caspases during epithelial cell apoptosis.

Its function is as follows. When phosphorylated, plays a role in filament reorganization. This chain is Keratin, type I cytoskeletal 18, found in Xenopus tropicalis (Western clawed frog).